Reading from the N-terminus, the 438-residue chain is Enolase (438 aa).

Substrate is bound by residues His159 and Glu168. Glu211 (proton donor) is an active-site residue. Mg(2+) contacts are provided by Asp246, Glu297, and Asp322. Positions 297 and 322 each coordinate substrate. The Proton acceptor role is filled by Lys347. Substrate is bound by residues 374–377 and Lys398; that span reads SHRS.

Belongs to the enolase family. In terms of assembly, homodimer. Mg(2+) is required as a cofactor.

It is found in the cytoplasm. It carries out the reaction (2R)-2-phosphoglycerate = phosphoenolpyruvate + H2O. It participates in carbohydrate degradation; glycolysis; pyruvate from D-glyceraldehyde 3-phosphate: step 4/5. The polypeptide is Enolase (enoA) (Aspergillus fumigatus (strain ATCC MYA-4609 / CBS 101355 / FGSC A1100 / Af293) (Neosartorya fumigata)).